The chain runs to 116 residues: Iron-sulfur cluster insertion protein ErpA (116 aa).

Residues Cys-44, Cys-108, and Cys-110 each coordinate iron-sulfur cluster.

This sequence belongs to the HesB/IscA family. In terms of assembly, homodimer. It depends on iron-sulfur cluster as a cofactor.

Its function is as follows. Required for insertion of 4Fe-4S clusters for at least IspG. This Shewanella putrefaciens (strain CN-32 / ATCC BAA-453) protein is Iron-sulfur cluster insertion protein ErpA.